Reading from the N-terminus, the 266-residue chain is ATP synthase subunit a (266 aa).

7 helical membrane-spanning segments follow: residues 28 to 48 (ISFT…AIFM), 90 to 110 (LIFT…VPLF), 125 to 145 (VTVT…VGFT), 158 to 178 (HGTP…SFIL), 187 to 207 (LFVA…FIVN), 216 to 236 (AFLA…MIGI), and 239 to 259 (LEFL…SLYL).

Belongs to the ATPase A chain family. F-type ATPases have 2 components, CF(1) - the catalytic core - and CF(0) - the membrane proton channel. CF(1) has five subunits: alpha(3), beta(3), gamma(1), delta(1), epsilon(1). CF(0) has three main subunits: a(1), b(2) and c(9-12). The alpha and beta chains form an alternating ring which encloses part of the gamma chain. CF(1) is attached to CF(0) by a central stalk formed by the gamma and epsilon chains, while a peripheral stalk is formed by the delta and b chains.

The protein resides in the cell inner membrane. In terms of biological role, key component of the proton channel; it plays a direct role in the translocation of protons across the membrane. This Zymomonas mobilis subsp. mobilis (strain ATCC 31821 / ZM4 / CP4) protein is ATP synthase subunit a.